Consider the following 186-residue polypeptide: Translation initiation factor IF-3 (186 aa).

The protein belongs to the IF-3 family. Monomer.

The protein resides in the cytoplasm. Its function is as follows. IF-3 binds to the 30S ribosomal subunit and shifts the equilibrium between 70S ribosomes and their 50S and 30S subunits in favor of the free subunits, thus enhancing the availability of 30S subunits on which protein synthesis initiation begins. The sequence is that of Translation initiation factor IF-3 from Borrelia garinii subsp. bavariensis (strain ATCC BAA-2496 / DSM 23469 / PBi) (Borreliella bavariensis).